The primary structure comprises 184 residues: Elongation factor P (184 aa).

This sequence belongs to the elongation factor P family.

It localises to the cytoplasm. The protein operates within protein biosynthesis; polypeptide chain elongation. Functionally, involved in peptide bond synthesis. Stimulates efficient translation and peptide-bond synthesis on native or reconstituted 70S ribosomes in vitro. Probably functions indirectly by altering the affinity of the ribosome for aminoacyl-tRNA, thus increasing their reactivity as acceptors for peptidyl transferase. In Polaromonas sp. (strain JS666 / ATCC BAA-500), this protein is Elongation factor P.